The following is a 288-amino-acid chain: tRNA pseudouridine synthase A (288 aa).

The active-site Nucleophile is Asp58. Tyr124 is a substrate binding site.

It belongs to the tRNA pseudouridine synthase TruA family. In terms of assembly, homodimer.

The enzyme catalyses uridine(38/39/40) in tRNA = pseudouridine(38/39/40) in tRNA. Its function is as follows. Formation of pseudouridine at positions 38, 39 and 40 in the anticodon stem and loop of transfer RNAs. In Corynebacterium diphtheriae (strain ATCC 700971 / NCTC 13129 / Biotype gravis), this protein is tRNA pseudouridine synthase A.